The chain runs to 1230 residues: Cullin-associated NEDD8-dissociated protein 1 (1230 aa).

Position 2 is an N-acetylalanine (alanine 2). 12 HEAT repeats span residues 2-39 (ASAS…KDSI), 44-81 (DSER…KVKE), 83-119 (QVET…ELPP), 131-165 (CKKI…LSRQ), 171-208 (NFHP…SCGN), 210-247 (VFVG…QAGH), 248-282 (RIGE…FESF), 289-366 (EVYP…TRHE), 370-407 (EFYK…QTRP), 424-467 (PLTM…VLPG), 471-510 (QHIP…NHSP), and 515-552 (PHVQ…VIRP). Lysine 55 carries the post-translational modification N6-acetyllysine. Residues 315-343 (DEDEDENAMDADGGDDDDQGSDDEYSDDG) are disordered. Residue serine 335 is modified to Phosphoserine. Residue serine 558 is modified to Phosphoserine. HEAT repeat units follow at residues 563–602 (PYIK…NLGD), 606–643 (SDLP…LKID), 646–683 (PVLG…NYSD), 688–725 (AMID…VYPS), 729–768 (KISG…TGTN), 770–808 (LGYM…ALTR), 809–845 (ACPK…LGEV), 852–889 (SGQL…GNLP), 890–927 (EYLP…GLKP), 928–960 (YVEN…KLTL), 961–998 (IDPE…DHPQ), 1002–1039 (PLLK…NKPS), 1043–1097 (DLLD…DSCL), 1099–1133 (RLDI…LSTL), and 1140–1189 (QRLD…IPEA). At lysine 971 the chain carries N6-acetyllysine.

This sequence belongs to the CAND family. In terms of assembly, interacts with TBP. Part of a complex that contains CUL1 and RBX1. Interacts with unneddylated cullins: interacts with CUL1, CUL2, CUL3, CUL4A, CUL4B and CUL5. Does not bind neddylated CUL1. Interaction with cullins is abolished in presence of COMMD1, which antagonizes with CAND1 for interacting with cullins. Interacts with ERCC6. Interacts with DCUN1D1, DCUN1D2, DCUN1D3, DCUN1D4 and DCUN1D5; these interactions are bridged by cullins and strongly inhibits the neddylation of cullins.

The protein localises to the cytoplasm. It is found in the nucleus. In terms of biological role, key assembly factor of SCF (SKP1-CUL1-F-box protein) E3 ubiquitin ligase complexes that promotes the exchange of the substrate-recognition F-box subunit in SCF complexes, thereby playing a key role in the cellular repertoire of SCF complexes. Acts as a F-box protein exchange factor. The exchange activity of CAND1 is coupled with cycles of neddylation conjugation: in the deneddylated state, cullin-binding CAND1 binds CUL1-RBX1, increasing dissociation of the SCF complex and promoting exchange of the F-box protein. Probably plays a similar role in other cullin-RING E3 ubiquitin ligase complexes. The polypeptide is Cullin-associated NEDD8-dissociated protein 1 (CAND1) (Pongo abelii (Sumatran orangutan)).